The following is a 500-amino-acid chain: Cysteine--tRNA ligase (500 aa).

C30 is a binding site for Zn(2+). The 'HIGH' region motif lies at P32–N42. Residues C224, H263, and E267 each coordinate Zn(2+). Residues K296–S300 carry the 'KMSKS' region motif. Position 299 (K299) interacts with ATP.

The protein belongs to the class-I aminoacyl-tRNA synthetase family. Monomer. Zn(2+) is required as a cofactor.

It is found in the cytoplasm. The enzyme catalyses tRNA(Cys) + L-cysteine + ATP = L-cysteinyl-tRNA(Cys) + AMP + diphosphate. The chain is Cysteine--tRNA ligase from Bartonella bacilliformis (strain ATCC 35685 / KC583 / Herrer 020/F12,63).